Reading from the N-terminus, the 342-residue chain is Heat-inducible transcription repressor HrcA (342 aa).

Belongs to the HrcA family.

In terms of biological role, negative regulator of class I heat shock genes (grpE-dnaK-dnaJ and groELS operons). Prevents heat-shock induction of these operons. This is Heat-inducible transcription repressor HrcA from Mesoplasma florum (strain ATCC 33453 / NBRC 100688 / NCTC 11704 / L1) (Acholeplasma florum).